Consider the following 358-residue polypeptide: Trace amine-associated receptor 7e (358 aa).

Over 1–47 (MATDDASFPWDQDSILSRDLLSALSSQLCYENLNRSCIRSPYSPGPR) the chain is Extracellular. N34 carries N-linked (GlcNAc...) asparagine glycosylation. Intrachain disulfides connect C37/C201 and C120/C205. A helical transmembrane segment spans residues 48 to 68 (LILHAVFGFSAVLAVCGNLLV). The Cytoplasmic segment spans residues 69-83 (MTSILHFRQLHSPAN). A helical transmembrane segment spans residues 84-104 (FLVASLACADLLVGLTVMPFS). At 105 to 121 (MVRSVEGCWYFGDIYCK) the chain is on the extracellular side. Residues 122-143 (FHSSFDVSFCYSSIFHLCFISV) form a helical membrane-spanning segment. At 144–166 (DRYIAVSDPLIYLTRFTASVSGK) the chain is on the cytoplasmic side. The helical transmembrane segment at 167–187 (CITFSWFLSIIYSFSLLYTGA) threads the bilayer. The Extracellular segment spans residues 188 to 212 (SEAGLEDLVSALTCVGGCQLAVNQS). N-linked (GlcNAc...) asparagine glycosylation is present at N210. A helical transmembrane segment spans residues 213-233 (WVFINFLLFLVPTLVMMTVYS). Over 234–274 (KVFLIAKQQAQNIEKIGKQTARASESYKDRVAKRERKAAKT) the chain is Cytoplasmic. The chain crosses the membrane as a helical span at residues 275 to 295 (LGITVAAFLLSWLPYFIDSII). Residues 296–309 (DAFLGFITPTYVYE) lie on the Extracellular side of the membrane. The chain crosses the membrane as a helical span at residues 310-333 (ILVWIAYYNSAMNPLIYAFFYPWF). The Cytoplasmic portion of the chain corresponds to 334–358 (RKAIKLIVTGKILRENSSATNLFPE).

The protein belongs to the G-protein coupled receptor 1 family.

It localises to the cell membrane. Functionally, olfactory receptor specific for N,N-dimethylalkylamines trace amines. Trace amine compounds are enriched in animal body fluids and act on trace amine-associated receptors (TAARs) to elicit both intraspecific and interspecific innate behaviors. Ligand-binding causes a conformation change that triggers signaling via G(s)-class of G alpha proteins (GNAL or GNAS). The chain is Trace amine-associated receptor 7e from Rattus norvegicus (Rat).